The chain runs to 518 residues: Membrane-bound lytic murein transglycosylase F (518 aa).

The N-terminal stretch at 1–21 is a signal peptide; sequence MKKLKINYLFIGILALLLAVA. Positions 22–269 are non-LT domain; the sequence is LWPSIPWFGK…RIEEKYLGHG (248 aa). The tract at residues 270–518 is LT domain; the sequence is DDFDYVDTRT…SRKGSEEKQN (249 aa). Residue glutamate 314 is part of the active site.

It in the N-terminal section; belongs to the bacterial solute-binding protein 3 family. The protein in the C-terminal section; belongs to the transglycosylase Slt family.

Its subcellular location is the cell outer membrane. It carries out the reaction Exolytic cleavage of the (1-&gt;4)-beta-glycosidic linkage between N-acetylmuramic acid (MurNAc) and N-acetylglucosamine (GlcNAc) residues in peptidoglycan, from either the reducing or the non-reducing ends of the peptidoglycan chains, with concomitant formation of a 1,6-anhydrobond in the MurNAc residue.. Functionally, murein-degrading enzyme that degrades murein glycan strands and insoluble, high-molecular weight murein sacculi, with the concomitant formation of a 1,6-anhydromuramoyl product. Lytic transglycosylases (LTs) play an integral role in the metabolism of the peptidoglycan (PG) sacculus. Their lytic action creates space within the PG sacculus to allow for its expansion as well as for the insertion of various structures such as secretion systems and flagella. This chain is Membrane-bound lytic murein transglycosylase F, found in Escherichia coli (strain SMS-3-5 / SECEC).